The primary structure comprises 750 residues: Catalase A (750 aa).

Positions 30–49 (ERDTADAHTQQPLTTDHGVR) are disordered. Active-site residues include H93 and N166. Y380 is a heme binding site.

The protein belongs to the catalase family. The cofactor is heme.

The protein localises to the peroxisome matrix. It carries out the reaction 2 H2O2 = O2 + 2 H2O. Its function is as follows. Catalyzes the degradation of hydrogen peroxide (H(2)O(2)) generated by peroxisomal oxidases to water and oxygen, thereby protecting cells from the toxic effects of hydrogen peroxide. This Aspergillus fumigatus (strain ATCC MYA-4609 / CBS 101355 / FGSC A1100 / Af293) (Neosartorya fumigata) protein is Catalase A (catA).